The primary structure comprises 35 residues: KKWGWLAWVDPAYEFIKGFGKGAIKEGNKDKWKNI.

In terms of assembly, bacteriocin activity requires interaction of alpha and beta peptides in a molar ratio of 7:1 or 8:1 respectively.

Functionally, kills Lactococci. The sequence is that of Bacteriocin lactococcin-G subunit beta from Lactococcus lactis subsp. lactis (Streptococcus lactis).